The following is a 636-amino-acid chain: ATP-dependent DNA helicase YoaA (636 aa).

The Helicase ATP-binding domain occupies 10–272 (QLAKAIPGFK…KDTQQLQKCA (263 aa)). ATP is bound at residue 45 to 52 (AGTGTGKT). [4Fe-4S] cluster contacts are provided by C108, C168, C173, and C179. The short motif at 225–228 (DEAH) is the DEAH box element.

It belongs to the helicase family. DinG subfamily. Interacts with the DNA polymerase III subunit Chi (holC), probably as a 1:1 complex. [4Fe-4S] cluster is required as a cofactor. It depends on Mg(2+) as a cofactor.

The enzyme catalyses Couples ATP hydrolysis with the unwinding of duplex DNA at the replication fork by translocating in the 5'-3' direction. This creates two antiparallel DNA single strands (ssDNA). The leading ssDNA polymer is the template for DNA polymerase III holoenzyme which synthesizes a continuous strand.. The catalysed reaction is ATP + H2O = ADP + phosphate + H(+). Non-hydrolyzable ATP analogs ATP-gamma-S and adenylyl-imidodiphosphate (AMP-PNP) inhibit helicase activity. DNA-dependent ATPase and 5'-3' DNA helicase. Has single-stranded (ss)DNA-dependent ATPase activity and 5'-3' helicase activity on forked DNA; both activities were measure in a YoaA:HolC (chi) complex. Requires a 20-35 nucleotide (nt) 5'-ssDNA tail; dsDNA with a 20 nt gap is also unwound. Unwinds damaged 3' nascent ends (such as those terminated by 3' azidothymidine (AZT), 3' dideoxy-C or an abasic site on the translocating strand), to promote repair and AZT excision. Without HolC the protein has much lower activity which could be due to YoaA instability or helicase stimulation by HolC. Genetically identified as involved in the repair of replication forks and tolerance of the chain-terminating nucleoside analog AZT. May act in proofreading during nucleotide misincorporation, it appears to aid in the removal of potential A-to-T transversion mutations in ndk mutants. The polypeptide is ATP-dependent DNA helicase YoaA (yoaA) (Escherichia coli (strain K12)).